The following is a 345-amino-acid chain: GTPase Obg (345 aa).

The Obg domain maps to 1-158 (MFIDSVKITL…RLVRLELKLI (158 aa)). The 181-residue stretch at 159-339 (ADVGLVGFPN…LKFMLLEEIK (181 aa)) folds into the OBG-type G domain. GTP is bound by residues 165-172 (GFPNVGKS), 190-194 (FTTLT), 212-215 (DIPG), 280-283 (SKSD), and 320-322 (SSL). Residues S172 and T192 each coordinate Mg(2+).

This sequence belongs to the TRAFAC class OBG-HflX-like GTPase superfamily. OBG GTPase family. Monomer. It depends on Mg(2+) as a cofactor.

Its subcellular location is the cytoplasm. Functionally, an essential GTPase which binds GTP, GDP and possibly (p)ppGpp with moderate affinity, with high nucleotide exchange rates and a fairly low GTP hydrolysis rate. Plays a role in control of the cell cycle, stress response, ribosome biogenesis and in those bacteria that undergo differentiation, in morphogenesis control. The protein is GTPase Obg of Campylobacter jejuni subsp. jejuni serotype O:6 (strain 81116 / NCTC 11828).